A 218-amino-acid chain; its full sequence is Histone chaperone ASF1B (218 aa).

This sequence belongs to the ASF1 family. Interacts with histone H3 and histone H4. Interacts strongly with the N-terminus of TOUSLED. Post-translationally, phosphorylated in vitro by TOUSLED.

Its subcellular location is the nucleus. Histone chaperone that facilitates histone deposition and histone exchange and removal during nucleosome assembly and disassembly. The protein is Histone chaperone ASF1B (ASF1B) of Arabidopsis thaliana (Mouse-ear cress).